Consider the following 413-residue polypeptide: Palmitoyltransferase ZDHHC6 (413 aa).

The Cytoplasmic portion of the chain corresponds to 1-24; sequence MGTFCSVVKFENLQELKRLCHWGP. The helical transmembrane segment at 25–45 threads the bilayer; it reads IIALGVIAICSAMAMIDSVLW. Residues 46–57 lie on the Lumenal side of the membrane; it reads YWPLHTTGGSVN. Residues 58–78 form a helical membrane-spanning segment; it reads FIMLINWTVMILYNYFNAMFV. Topologically, residues 79–143 are cytoplasmic; the sequence is GPGFVPLGWK…NCCGYQNHAS (65 aa). The 51-residue stretch at 99 to 149 folds into the DHHC domain; sequence QYCKVCQAYKAPRSHHCRKCNRCVMKMDHHCPWINNCCGYQNHASFTLFLL. The active-site S-palmitoyl cysteine intermediate is the Cys-129. Residues 144–164 form a helical membrane-spanning segment; the sequence is FTLFLLLAPLGCIHAAFIFVM. Over 165 to 194 the chain is Lumenal; that stretch reads TMYTQLYNRLSFGWNTVKIDMSAARRDPLP. The chain crosses the membrane as a helical span at residues 195–215; sequence IIPFGLAAFAATLFALGLALG. At 216 to 413 the chain is on the cytoplasmic side; it reads TTIAVGMLFF…QAPEGEKKNR (198 aa). Residues 313–398 enclose the SH3 domain; that stretch reads VRSVRYKVIE…PRNCVEKCPC (86 aa). S-palmitoyl cysteine attachment occurs at residues Cys-328, Cys-329, and Cys-343. Residues 410 to 413 carry the Di-lysine motif motif; it reads KKNR.

It belongs to the DHHC palmitoyltransferase family. Homooligomerizes. Interacts with SELENOK. Post-translationally, palmitoylated at 3 different sites by ZDHHC16. The combination of the different palmitoylation events strongly affects the quaternary assembly of ZDHHC6, its localization, stability and function. Palmitoylation at Cys-328 accelerates the turnover of ZDHHC6. Depalmitoylated by LYPLA2.

The protein resides in the endoplasmic reticulum membrane. It carries out the reaction L-cysteinyl-[protein] + hexadecanoyl-CoA = S-hexadecanoyl-L-cysteinyl-[protein] + CoA. It catalyses the reaction L-cysteinyl-[protein] + octadecanoyl-CoA = S-octadecanoyl-L-cysteinyl-[protein] + CoA. In terms of biological role, endoplasmic reticulum palmitoyl acyltransferase that mediates palmitoylation of proteins such as AMFR, CALX, ITPR1 and TFRC. Palmitoylates calnexin (CALX), which is required for its association with the ribosome-translocon complex and efficient folding of glycosylated proteins. Mediates palmitoylation of AMFR, promoting AMFR distribution to the peripheral endoplasmic reticulum. Together with SELENOK, palmitoylates ITPR1 in immune cells, leading to regulate ITPR1 stability and function. Stearoyltransferase that mediates stearoylation of TFRC to inhibit TFRC-mediated activation of the JNK pathway and mitochondrial fragmentation. The chain is Palmitoyltransferase ZDHHC6 from Bos taurus (Bovine).